A 319-amino-acid polypeptide reads, in one-letter code: 4-diphosphocytidyl-2-C-methyl-D-erythritol kinase (319 aa).

K18 is a catalytic residue. 103–113 (PIGAGLAGGST) contacts ATP. D145 is a catalytic residue.

The protein belongs to the GHMP kinase family. IspE subfamily.

The catalysed reaction is 4-CDP-2-C-methyl-D-erythritol + ATP = 4-CDP-2-C-methyl-D-erythritol 2-phosphate + ADP + H(+). It functions in the pathway isoprenoid biosynthesis; isopentenyl diphosphate biosynthesis via DXP pathway; isopentenyl diphosphate from 1-deoxy-D-xylulose 5-phosphate: step 3/6. In terms of biological role, catalyzes the phosphorylation of the position 2 hydroxy group of 4-diphosphocytidyl-2C-methyl-D-erythritol. The protein is 4-diphosphocytidyl-2-C-methyl-D-erythritol kinase of Prochlorococcus marinus (strain NATL1A).